Here is a 517-residue protein sequence, read N- to C-terminus: Protein MGF 505-2R (517 aa).

This sequence belongs to the asfivirus MGF 505 family.

Its function is as follows. Plays a role in virus cell tropism, and may be required for efficient virus replication in macrophages. This is Protein MGF 505-2R from Ornithodoros (relapsing fever ticks).